The sequence spans 114 residues: uncharacterized protein (114 aa).

This is an uncharacterized protein from Mycobacterium bovis (strain ATCC BAA-935 / AF2122/97).